The primary structure comprises 330 residues: tRNA-modifying protein YgfZ (330 aa).

The folate site is built by W28 and W190.

Belongs to the tRNA-modifying YgfZ family.

It is found in the cytoplasm. Folate-binding protein involved in regulating the level of ATP-DnaA and in the modification of some tRNAs. It is probably a key factor in regulatory networks that act via tRNA modification, such as initiation of chromosomal replication. The chain is tRNA-modifying protein YgfZ from Yersinia pseudotuberculosis serotype IB (strain PB1/+).